The sequence spans 166 residues: MTSIETTVVKVGIADLKIIQFPQLIRTSGLGSCVGTVIYDDKKEIAGLSHVLLPYSQQGKQANTNPYKYADTAISYLYNELLKRGANQSSLKAKLAGGAQMFQLRTGSDLMRIGPRNVESVELALAEFGIPIVSKDVGGNLGRTIEFDPRSKLLAVRKINQEVIMI.

It belongs to the CheD family.

The enzyme catalyses L-glutaminyl-[protein] + H2O = L-glutamyl-[protein] + NH4(+). Probably deamidates glutamine residues to glutamate on methyl-accepting chemotaxis receptors (MCPs), playing an important role in chemotaxis. The protein is Probable chemoreceptor glutamine deamidase CheD of Oceanobacillus iheyensis (strain DSM 14371 / CIP 107618 / JCM 11309 / KCTC 3954 / HTE831).